The following is a 402-amino-acid chain: Secondary metabolism regulator laeA (402 aa).

Residues 1–70 (MSLKYYLNDL…MSPTEVCSTD (70 aa)) form a disordered region. Residues 11-21 (SDSDSESESEC) are compositionally biased toward acidic residues.

This sequence belongs to the methyltransferase superfamily. LaeA methyltransferase family.

Its subcellular location is the nucleus. It catalyses the reaction L-methionyl-[protein] + S-adenosyl-L-methionine = S-methyl-L-methionyl-[protein] + S-adenosyl-L-homocysteine. In terms of biological role, methyltransferase that performs automethylation. No other methyl-accepting substrate has been identified yet. Acts as a global regulator for secondary metabolite gene expression. Negatively regulates the production of coprinoferrin, a structurally novel acylated tripeptide hydroxamate siderophore. The sequence is that of Secondary metabolism regulator laeA from Coprinopsis cinerea (strain Okayama-7 / 130 / ATCC MYA-4618 / FGSC 9003) (Inky cap fungus).